The sequence spans 95 residues: Aspartyl/glutamyl-tRNA(Asn/Gln) amidotransferase subunit C (95 aa).

This sequence belongs to the GatC family. In terms of assembly, heterotrimer of A, B and C subunits.

It carries out the reaction L-glutamyl-tRNA(Gln) + L-glutamine + ATP + H2O = L-glutaminyl-tRNA(Gln) + L-glutamate + ADP + phosphate + H(+). The catalysed reaction is L-aspartyl-tRNA(Asn) + L-glutamine + ATP + H2O = L-asparaginyl-tRNA(Asn) + L-glutamate + ADP + phosphate + 2 H(+). In terms of biological role, allows the formation of correctly charged Asn-tRNA(Asn) or Gln-tRNA(Gln) through the transamidation of misacylated Asp-tRNA(Asn) or Glu-tRNA(Gln) in organisms which lack either or both of asparaginyl-tRNA or glutaminyl-tRNA synthetases. The reaction takes place in the presence of glutamine and ATP through an activated phospho-Asp-tRNA(Asn) or phospho-Glu-tRNA(Gln). The polypeptide is Aspartyl/glutamyl-tRNA(Asn/Gln) amidotransferase subunit C (Rhodopseudomonas palustris (strain BisA53)).